The chain runs to 562 residues: Putative transport protein Spro_1639 (562 aa).

The next 5 helical transmembrane spans lie at 8–28 (LLNGNYILLLFVVLALGLCLG), 37–57 (LGNSIGVLVVSLLLGQQHFAI), 66–86 (FMLFIFCVGVEAGPNFFSIFF), 94–114 (MLALVMVGSAMVIAIGLGKLF), and 158–178 (HLSLGYALTYLIGLVSLIFGA). 2 consecutive RCK C-terminal domains span residues 202–288 (LDTD…SFRN) and 290–373 (KEVF…KIGF). 5 consecutive transmembrane segments (helical) span residues 383–403 (LLAFCAFFIIGLLIGQITIQF), 406–426 (FSFGIGNAAGLLMAGIMLGFL), 447–467 (FGLMVFMAGVGLSAGAGIGNS), 475–495 (MLIAGLIVSLVPVVICFLFGA), and 541–561 (IANVLLTLAGSLIVVLWPGIL).

Belongs to the AAE transporter (TC 2.A.81) family. YbjL subfamily.

The protein resides in the cell membrane. The chain is Putative transport protein Spro_1639 from Serratia proteamaculans (strain 568).